Here is a 267-residue protein sequence, read N- to C-terminus: Phosphonoacetaldehyde hydrolase (267 aa).

D10 acts as the Nucleophile in catalysis. Residues D10 and A12 each coordinate Mg(2+). K51 acts as the Schiff-base intermediate with substrate in catalysis. D184 contacts Mg(2+).

It belongs to the HAD-like hydrolase superfamily. PhnX family. In terms of assembly, homodimer. The cofactor is Mg(2+).

The catalysed reaction is phosphonoacetaldehyde + H2O = acetaldehyde + phosphate + H(+). Involved in phosphonate degradation. The protein is Phosphonoacetaldehyde hydrolase of Paraburkholderia xenovorans (strain LB400).